Reading from the N-terminus, the 253-residue chain is Sulfate transporter CysZ (253 aa).

Transmembrane regions (helical) follow at residues F31–F51, L75–I95, I151–W171, and I222–V242.

The protein belongs to the CysZ family.

The protein resides in the cell inner membrane. In terms of biological role, high affinity, high specificity proton-dependent sulfate transporter, which mediates sulfate uptake. Provides the sulfur source for the cysteine synthesis pathway. The polypeptide is Sulfate transporter CysZ (Escherichia coli O7:K1 (strain IAI39 / ExPEC)).